We begin with the raw amino-acid sequence, 1072 residues long: Guanylyl cyclase C (1072 aa).

The first 22 residues, 1–22, serve as a signal peptide directing secretion; sequence MTSLLGLAVRLLLFQPTLMFWA. Over 23–429 the chain is Extracellular; that stretch reads SQVRQKCHNG…PNDVPGLGPQ (407 aa). N-linked (GlcNAc...) asparagine glycosylation is found at asparagine 31, asparagine 74, asparagine 78, asparagine 187, asparagine 194, asparagine 306, and asparagine 401. The helical transmembrane segment at 430 to 453 threads the bilayer; sequence ILMIAVFTLTGIVVVLLLIALLVL. Residues 454 to 1072 are Cytoplasmic-facing; it reads RKYRRDHELR…NNSDHDSTYF (619 aa). One can recognise a Protein kinase domain in the interval 488–748; it reads LKIDDDRRRD…KIESTLAKIF (261 aa). The region spanning 823–953 is the Guanylate cyclase domain; the sequence is TIYFSDIVGF…DTVNTASRME (131 aa).

Belongs to the adenylyl cyclase class-4/guanylyl cyclase family. In terms of assembly, homotrimer. Interacts via its C-terminal region with PDZK2. Interacts with the lectin chaperone VIP36. Glycosylation at Asn-74 and/or Asn-78 is required for interaction with VIP36 while glycosylation at Asn-401 modulates ligand-mediated GC-C activation.

It is found in the cell membrane. The protein resides in the endoplasmic reticulum membrane. The catalysed reaction is GTP = 3',5'-cyclic GMP + diphosphate. Functionally, guanylyl cyclase that catalyzes synthesis of cyclic GMP (cGMP) from GTP. Receptor for the E.coli heat-stable enterotoxin; E.coli enterotoxin markedly stimulates the accumulation of cGMP in mammalian cells expressing GUCY2C. In Rattus norvegicus (Rat), this protein is Guanylyl cyclase C (Gucy2c).